Consider the following 618-residue polypeptide: 1-deoxy-D-xylulose-5-phosphate synthase (618 aa).

Residues H73 and 114–116 contribute to the thiamine diphosphate site; that span reads GHS. D145 serves as a coordination point for Mg(2+). Residues 146-147, N174, Y284, and E364 each bind thiamine diphosphate; that span reads GA. N174 lines the Mg(2+) pocket.

This sequence belongs to the transketolase family. DXPS subfamily. In terms of assembly, homodimer. Requires Mg(2+) as cofactor. Thiamine diphosphate serves as cofactor.

The enzyme catalyses D-glyceraldehyde 3-phosphate + pyruvate + H(+) = 1-deoxy-D-xylulose 5-phosphate + CO2. Its pathway is metabolic intermediate biosynthesis; 1-deoxy-D-xylulose 5-phosphate biosynthesis; 1-deoxy-D-xylulose 5-phosphate from D-glyceraldehyde 3-phosphate and pyruvate: step 1/1. Functionally, catalyzes the acyloin condensation reaction between C atoms 2 and 3 of pyruvate and glyceraldehyde 3-phosphate to yield 1-deoxy-D-xylulose-5-phosphate (DXP). This chain is 1-deoxy-D-xylulose-5-phosphate synthase, found in Clostridium beijerinckii (strain ATCC 51743 / NCIMB 8052) (Clostridium acetobutylicum).